A 132-amino-acid chain; its full sequence is Small ribosomal subunit protein uS8 (132 aa).

It belongs to the universal ribosomal protein uS8 family. Part of the 30S ribosomal subunit. Contacts proteins S5 and S12.

Its function is as follows. One of the primary rRNA binding proteins, it binds directly to 16S rRNA central domain where it helps coordinate assembly of the platform of the 30S subunit. In Stenotrophomonas maltophilia (strain R551-3), this protein is Small ribosomal subunit protein uS8.